The chain runs to 82 residues: Small ribosomal subunit protein bS18 (82 aa).

Residues 1 to 20 (MSEASSAPVRRPFHRRRKTC) are disordered.

This sequence belongs to the bacterial ribosomal protein bS18 family. Part of the 30S ribosomal subunit. Forms a tight heterodimer with protein bS6.

Functionally, binds as a heterodimer with protein bS6 to the central domain of the 16S rRNA, where it helps stabilize the platform of the 30S subunit. The polypeptide is Small ribosomal subunit protein bS18 (Rhizobium etli (strain CIAT 652)).